We begin with the raw amino-acid sequence, 708 residues long: MEANHQRNDLGLVALTMLAQYHNISLNPEEIKHKFDLDGKGLSLTSWLLAAKSLALKAKHIKKEISRLHLVNLPALVWQDNGKHFLLVKVDTDNNRYLTYNLEQDAPQILSQDEFEACYQGQLILVTSRASVVGQLAKFDFTWFIPAVIKYRKIFLETLIVSIFLQIFALITPLFFQVVMDKVLVHRGFSTLNIITVALAIVIIFEIVLSGLRTYVFSHSTSRIDVELGAKLFRHLLSLPISYFENRRVGDTVARVRELDQIRNFLTGQALTSVLDLLFSFIFFAVMWYYSPKLTLVILGSLPFYILWSIFISPILRRRLDDKFARSADNQAFLVESVTAINMIKAMAVAPQMTDTWDKQLASYVSSSFRVTVLATIGQQGVQLIQKTVMVINLWLGAHLVISGDLSIGQLIAFNMLSGQVIAPVIRLAQLWQDFQQVGISVTRLGDVLNSPTEQYQGKLSLPEIKGDISFKNIRFRYKPDAPTILNNVNLEIRQGEVIGIVGRSGSGKSTLTKLLQRFYIPENGQVLIDGHDLALADPNWLRRQIGVVLQDNVLLNRSIRENIALSDPGMPMERVIYAAKLAGAHDFISELREGYNTIVGEQGAGLSGGQRQRIAIARALVNNPKILIFDEATSALDYESEHIIMQNMQKICQGRTVILIAHRLSTVKNADRIIVMEKGEIVEQGKHHELLQNSNGLYSYLHQLQLN.

One can recognise a Peptidase C39 domain in the interval 1 to 126 (MEANHQRNDL…ACYQGQLILV (126 aa)). Positions 155–437 (FLETLIVSIF…LAQLWQDFQQ (283 aa)) constitute an ABC transmembrane type-1 domain. A run of 5 helical transmembrane segments spans residues 159–179 (LIVS…FQVV), 192–212 (LNII…LSGL), 270–290 (ALTS…MWYY), 296–316 (LVIL…SPIL), and 389–409 (VMVI…LSIG). The ABC transporter domain maps to 469–704 (ISFKNIRFRY…SNGLYSYLHQ (236 aa)). Position 503–510 (503–510 (GRSGSGKS)) interacts with ATP.

The protein belongs to the ABC transporter superfamily. Protein-1 exporter (TC 3.A.1.109) family. In terms of assembly, homodimer.

The protein localises to the cell inner membrane. It catalyses the reaction ATP + H2O + proteinSide 1 = ADP + phosphate + proteinSide 2.. Its function is as follows. Part of the ABC transporter complex LktBD involved in leukotoxin export. Transmembrane domains (TMD) form a pore in the inner membrane and the ATP-binding domain (NBD) is responsible for energy generation. In Bibersteinia trehalosi (Pasteurella trehalosi), this protein is Leukotoxin translocation ATP-binding protein LktB (lktB).